We begin with the raw amino-acid sequence, 512 residues long: Ribose import ATP-binding protein RbsA 1 (512 aa).

2 consecutive ABC transporter domains span residues 8–244 (FRME…IGRE) and 257–502 (PEEK…LNIG). 40–47 (GENGAGKS) contributes to the ATP binding site.

This sequence belongs to the ABC transporter superfamily. Ribose importer (TC 3.A.1.2.1) family. In terms of assembly, the complex is composed of an ATP-binding protein (RbsA), two transmembrane proteins (RbsC) and a solute-binding protein (RbsB).

Its subcellular location is the cell inner membrane. It carries out the reaction D-ribose(out) + ATP + H2O = D-ribose(in) + ADP + phosphate + H(+). Part of the ABC transporter complex RbsABC involved in ribose import. Responsible for energy coupling to the transport system. This chain is Ribose import ATP-binding protein RbsA 1, found in Rhizobium etli (strain ATCC 51251 / DSM 11541 / JCM 21823 / NBRC 15573 / CFN 42).